Here is a 934-residue protein sequence, read N- to C-terminus: Complement component C6 (934 aa).

Residues 1-21 form the signal peptide; the sequence is MARRSVLYFILLNALINKGQA. 11 cysteine pairs are disulfide-bonded: Cys-22–Cys-61, Cys-24–Cys-65, Cys-35–Cys-73, Cys-39–Cys-78, Cys-82–Cys-117, Cys-93–Cys-127, Cys-96–Cys-133, Cys-140–Cys-151, Cys-146–Cys-164, Cys-158–Cys-173, and Cys-180–Cys-218. 2 consecutive TSP type-1 domains span residues 22-79 and 81-134; these read CFCD…QRCP and NCLL…KLCK. Trp-29 is a glycosylation site (C-linked (Man) tryptophan). Trp-32 is a glycosylation site (C-linked (Man) tryptophan; partial). O-linked (Fuc...) threonine glycosylation is present at Thr-38. C-linked (Man) tryptophan; partial glycosylation occurs at Trp-90. The 38-residue stretch at 138 to 175 folds into the LDL-receptor class A domain; that stretch reads ADCKNKFRCDSGRCIARKLECNGENDCGDNSDERDCGR. Positions 156, 159, 161, 163, 169, and 170 each coordinate Ca(2+). An MACPF domain is found at 176–522; sequence TKAVCTRKYN…EYAAKFDPCQ (347 aa). The chain crosses the membrane as a beta stranded span at residues 278–290; the sequence is SFSVPIFYSSKRS. Asn-324 carries an N-linked (GlcNAc...) asparagine glycan. An O-linked (Fuc...) threonine glycan is attached at Thr-392. Cystine bridges form between Cys-399/Cys-420, Cys-499/Cys-623, Cys-521/Cys-570, Cys-523/Cys-539, Cys-526/Cys-541, Cys-543/Cys-552, Cys-577/Cys-611, Cys-589/Cys-601, Cys-644/Cys-686, Cys-672/Cys-699, Cys-704/Cys-746, Cys-732/Cys-761, Cys-773/Cys-823, Cys-784/Cys-801, Cys-786/Cys-837, and Cys-793/Cys-816. Residues 402–415 traverse the membrane as a beta stranded segment; that stretch reads IETKKRVLFAKKTK. Residues 523–553 enclose the EGF-like domain; that stretch reads CAPCPNNGRPTLSGTECLCVCQSGTYGENCE. A TSP type-1 3 domain is found at 565–612; it reads DGQWGCWSSWSTCDATYKRSRTRECNNPAPQRGGKRCEGEKRQEEDCT. Trp-568, Trp-571, and Trp-574 each carry a C-linked (Man) tryptophan; partial glycan. 2 CCP regions span residues 611 to 688 and 689 to 765; these read CTFS…RCLP and DGTW…EKDT. 2 Sushi domains span residues 642–701 and 702–763; these read SGCP…ECQR and TECI…TCEK. The segment at 642 to 934 is C5b-binding domain; that stretch reads SGCPQPVPPE…EILHPGKCLA (293 aa). Residues 766–840 form a factor I module (FIM) 1 region; the sequence is LTKLKGHCQL…FLHIGSCQDG (75 aa). Residues 780–839 enclose the Kazal-like 1 domain; it reads SGSECICMSPEEDCSHHSEDLCVFDTDSNDYFTSPACKFLAEKCLNNQQLHFLHIGSCQD. Asn-855 carries N-linked (GlcNAc...) asparagine glycosylation. A factor I module (FIM) 2 region spans residues 858–934; that stretch reads KKESCGYDTC…EILHPGKCLA (77 aa). 5 disulfide bridges follow: Cys-862–Cys-873, Cys-867–Cys-919, Cys-880–Cys-897, Cys-882–Cys-932, and Cys-888–Cys-912. Positions 876–934 constitute a Kazal-like 2 domain; the sequence is STSKCVCLLPPQCFKGGNQLYCVKMGSSTSEKTLNICEVGTIRCANRKMEILHPGKCLA.

This sequence belongs to the complement C6/C7/C8/C9 family. In terms of assembly, component of the membrane attack complex (MAC), composed of complement C5b, C6, C7, C8A, C8B, C8G and multiple copies of the pore-forming subunit C9. In terms of processing, all cysteine residues are assumed to be cross-linked to one another. Individual modules containing an even number of conserved cysteine residues are supposed to have disulfide linkages only within the same module.

Its subcellular location is the secreted. It localises to the target cell membrane. Its activity is regulated as follows. Membrane attack complex (MAC) assembly is inhibited by CD59, thereby protecting self-cells from damage during complement activation. MAC assembly is also inhibited by clusterin (CLU) chaperones that inhibit polymerization of C9. Functionally, component of the membrane attack complex (MAC), a multiprotein complex activated by the complement cascade, which inserts into a target cell membrane and forms a pore, leading to target cell membrane rupture and cell lysis. The MAC is initiated by proteolytic cleavage of C5 into complement C5b in response to the classical, alternative, lectin and GZMK complement pathways. The complement pathways consist in a cascade of proteins that leads to phagocytosis and breakdown of pathogens and signaling that strengthens the adaptive immune system. Together with component C5b, involved in MAC complex assembly: complement C5b and C6 associate with the outer leaflet of target cell membrane, reducing the energy for membrane bending. The polypeptide is Complement component C6 (Homo sapiens (Human)).